The primary structure comprises 318 residues: Lipid A biosynthesis acyltransferase (318 aa).

A helical transmembrane segment spans residues 27-47 (PQYWGIWLGIFFLLLLAFVPF). The short motif at 145–150 (HGWAID) is the HXXXXD motif element.

It belongs to the LpxL/LpxM/LpxP family. LpxM subfamily.

It localises to the cell inner membrane. The catalysed reaction is an alpha-Kdo-(2-&gt;4)-alpha-Kdo-(2-&gt;6)-(acyl)-lipid IVA + a fatty acyl-[ACP] = an alpha-Kdo-(2-&gt;4)-alpha-Kdo-(2-&gt;6)-lipid A + holo-[ACP]. The protein operates within glycolipid biosynthesis; KDO(2)-lipid A biosynthesis; KDO(2)-lipid A from CMP-3-deoxy-D-manno-octulosonate and lipid IV(A): step 4/4. It functions in the pathway bacterial outer membrane biogenesis; lipopolysaccharide biosynthesis. Functionally, catalyzes the transfer of an acyl chain from an acyl-[acyl-carrier-protein] (ACP) to a Kdo(2)-(acyl)-lipid IV(A) to form a Kdo(2)-lipid A. This Haemophilus influenzae (strain ATCC 51907 / DSM 11121 / KW20 / Rd) protein is Lipid A biosynthesis acyltransferase.